A 417-amino-acid chain; its full sequence is Serine hydroxymethyltransferase (417 aa).

(6S)-5,6,7,8-tetrahydrofolate contacts are provided by residues leucine 121 and glycine 125–leucine 127. Position 229 is an N6-(pyridoxal phosphate)lysine (lysine 229). (6S)-5,6,7,8-tetrahydrofolate is bound at residue serine 355–phenylalanine 357.

This sequence belongs to the SHMT family. Homodimer. It depends on pyridoxal 5'-phosphate as a cofactor.

It localises to the cytoplasm. It catalyses the reaction (6R)-5,10-methylene-5,6,7,8-tetrahydrofolate + glycine + H2O = (6S)-5,6,7,8-tetrahydrofolate + L-serine. Its pathway is one-carbon metabolism; tetrahydrofolate interconversion. The protein operates within amino-acid biosynthesis; glycine biosynthesis; glycine from L-serine: step 1/1. Functionally, catalyzes the reversible interconversion of serine and glycine with tetrahydrofolate (THF) serving as the one-carbon carrier. This reaction serves as the major source of one-carbon groups required for the biosynthesis of purines, thymidylate, methionine, and other important biomolecules. Also exhibits THF-independent aldolase activity toward beta-hydroxyamino acids, producing glycine and aldehydes, via a retro-aldol mechanism. This Citrobacter koseri (strain ATCC BAA-895 / CDC 4225-83 / SGSC4696) protein is Serine hydroxymethyltransferase.